We begin with the raw amino-acid sequence, 526 residues long: tRNA-2-methylthio-N(6)-dimethylallyladenosine synthase (526 aa).

A disordered region spans residues 1–24 (MTQQLNHAKVNQHPGQATLPETAE). The 117-residue stretch at 28–144 (RTYEVKTYGC…LPTLLQRAEH (117 aa)) folds into the MTTase N-terminal domain. The [4Fe-4S] cluster site is built by cysteine 37, cysteine 73, cysteine 107, cysteine 181, cysteine 185, and cysteine 188. Residues 167 to 403 (RESAYAGWVS…MVVQEQVCEE (237 aa)) form the Radical SAM core domain. Residues 406-477 (QKLIGTTVEL…PFFLIADSGV (72 aa)) form the TRAM domain.

This sequence belongs to the methylthiotransferase family. MiaB subfamily. In terms of assembly, monomer. It depends on [4Fe-4S] cluster as a cofactor.

The protein resides in the cytoplasm. The enzyme catalyses N(6)-dimethylallyladenosine(37) in tRNA + (sulfur carrier)-SH + AH2 + 2 S-adenosyl-L-methionine = 2-methylsulfanyl-N(6)-dimethylallyladenosine(37) in tRNA + (sulfur carrier)-H + 5'-deoxyadenosine + L-methionine + A + S-adenosyl-L-homocysteine + 2 H(+). Catalyzes the methylthiolation of N6-(dimethylallyl)adenosine (i(6)A), leading to the formation of 2-methylthio-N6-(dimethylallyl)adenosine (ms(2)i(6)A) at position 37 in tRNAs that read codons beginning with uridine. In Corynebacterium glutamicum (strain R), this protein is tRNA-2-methylthio-N(6)-dimethylallyladenosine synthase.